Reading from the N-terminus, the 356-residue chain is RuBisCO accumulation factor 1 (356 aa).

The N-terminal alpha-helix stretch occupies residues 9–192 (LSEEERQELL…RALIEALLLD (184 aa)). The C-terminal beta-sheet stretch occupies residues 216–342 (PRLLPFAGTL…LVLILRPKRV (127 aa)).

It belongs to the RAF family. In terms of assembly, homodimer. Forms an RbcL(8)-Raf1(8) complex. Forms complexes of many stoichiometries with RbcL with and without RbcS. RbcX and Raf1 can bind simultaneously to RbcL.

The protein localises to the cytoplasm. Its function is as follows. A major RuBisCO chaperone. Acts after GroEL-GroES chaperonin to fold and/or assemble the large subunit of RuBisCO (ccbL, rbcL). Cooperates with RbcX in RbcL folding, plays the major role in assembly of dimers into RbcL(8)-Raf1(8) intermediate complexes. RbcS replaces Raf1, leading to holoenzyme formation. In terms of biological role, the Raf1 dimer brackets an RbcL dimer, leading to RbcL(8)-Raf1(8) complex formation. RbcS displaces Raf1, resulting in holoenzyme formation. Probably plays a role in early carboxysome assembly; in its absence CcaA, CcmM, CcmN, RbcL and RbcS colocalize in small patches while the shell proteins CcmK2, CcmK3 and CcmK4 are found diffused in the cytoplasm. Functionally, it has been suggested that Raf1 and RbcX are partially functionally redundant. Other evidence suggests they are antagonistic in mediating RuBisCO assembly. The polypeptide is RuBisCO accumulation factor 1 (Synechococcus elongatus (strain ATCC 33912 / PCC 7942 / FACHB-805) (Anacystis nidulans R2)).